A 359-amino-acid polypeptide reads, in one-letter code: UDP-2-acetamido-2-deoxy-3-oxo-D-glucuronate aminotransferase (359 aa).

Positions 29, 31, and 184 each coordinate UDP-2-acetamido-2-deoxy-alpha-D-ribo-hex-3-uluronate. Lys185 carries the N6-(pyridoxal phosphate)lysine modification. Residues Arg229, His308, and Tyr309 each contribute to the UDP-2-acetamido-2-deoxy-alpha-D-ribo-hex-3-uluronate site.

This sequence belongs to the DegT/DnrJ/EryC1 family. Homodimer. It depends on pyridoxal 5'-phosphate as a cofactor.

It catalyses the reaction UDP-2-acetamido-2-deoxy-alpha-D-ribo-hex-3-uluronate + L-glutamate = UDP-2-acetamido-3-amino-2,3-dideoxy-alpha-D-glucuronate + 2-oxoglutarate. It functions in the pathway bacterial outer membrane biogenesis; LPS O-antigen biosynthesis. Its function is as follows. Plays a role in the biosynthesis of B-band O antigen for serotype O5. Catalyzes the amination of UDP-2-acetamido-2-deoxy-3-oxo-D-glucuronic acid (UDP-3-oxo-D-GlcNAcA) to UDP-2-acetamido-3-amino-2,3-dideoxy-D-glucuronic acid (UDP-GlcNAc3NA), using L-glutamate as the preferred amine donor. The polypeptide is UDP-2-acetamido-2-deoxy-3-oxo-D-glucuronate aminotransferase (Pseudomonas aeruginosa (strain ATCC 15692 / DSM 22644 / CIP 104116 / JCM 14847 / LMG 12228 / 1C / PRS 101 / PAO1)).